The sequence spans 223 residues: AMSH-like ubiquitin thioesterase 2 (223 aa).

The region spanning 49 to 177 (VHISERLLED…YGIFKLTDPG (129 aa)) is the MPN domain. Zn(2+) contacts are provided by histidine 127, histidine 129, aspartate 140, histidine 142, cysteine 185, histidine 191, and histidine 193. Residues 127 to 140 (HTHPSQGCFMSSVD) carry the JAMM motif motif.

Belongs to the peptidase M67C family. Zn(2+) serves as cofactor.

Functionally, zinc metalloprotease that cleaves 'Lys-48'- and 'Lys-63'-linked polyubiquitin chains. This Arabidopsis thaliana (Mouse-ear cress) protein is AMSH-like ubiquitin thioesterase 2 (AMSH2).